The chain runs to 55 residues: Large ribosomal subunit protein bL33 (55 aa).

It belongs to the bacterial ribosomal protein bL33 family.

The chain is Large ribosomal subunit protein bL33 from Buchnera aphidicola subsp. Acyrthosiphon pisum (strain 5A).